The chain runs to 194 residues: Flagellar transcriptional regulator FlhC (194 aa).

Zn(2+) contacts are provided by Cys-139, Cys-142, Cys-159, and Cys-162.

It belongs to the FlhC family. In terms of assembly, heterohexamer composed of two FlhC and four FlhD subunits. Each FlhC binds a FlhD dimer, forming a heterotrimer, and a hexamer assembles by dimerization of two heterotrimers. Zn(2+) is required as a cofactor.

The protein localises to the cytoplasm. Functions in complex with FlhD as a master transcriptional regulator that regulates transcription of several flagellar and non-flagellar operons by binding to their promoter region. Activates expression of class 2 flagellar genes, including fliA, which is a flagellum-specific sigma factor that turns on the class 3 genes. Also regulates genes whose products function in a variety of physiological pathways. The chain is Flagellar transcriptional regulator FlhC from Xenorhabdus nematophila (Achromobacter nematophilus).